Reading from the N-terminus, the 239-residue chain is Probable 2-phosphosulfolactate phosphatase (239 aa).

It belongs to the ComB family. Mg(2+) is required as a cofactor.

The enzyme catalyses (2R)-O-phospho-3-sulfolactate + H2O = (2R)-3-sulfolactate + phosphate. This is Probable 2-phosphosulfolactate phosphatase from Clostridium botulinum (strain Langeland / NCTC 10281 / Type F).